We begin with the raw amino-acid sequence, 413 residues long: MAFIAALGLLMAGICPAVLCDGTLGRDTLSHEDHGKGRQLHSLTLASSNTDFALSLYKKLALRNPDKNVVFSPLSISAALTILSLGAKDSTMEEILEGLKFNLTEITEEEIHQGFGHLLQRLSQPEDQVEINTGSALFIDKEQPILSEFQEKTRALYQAEAFIADFKQPNEAKKLINDYVSNQTQGKIAELFSDLEERTSMVLVNYLLFKGKWKVPFNPNDTFESEFYLDEKRSVKVPMMKIKEVTTPYVRDEELSCSVLELKYTGNASALFILPDQGKMQQVESSLQPETLKKWKDSLIPRIINDLRMPKFSISTDYSLKEVLPELGIKKVFSQQADLSRITGTKDLYVSQVVHKAVLDVDETGTEATAATGVATVIRRQPRTLNFNRPFMVVITDMDSQSILFVAKITNPK.

The signal sequence occupies residues 1 to 28 (MAFIAALGLLMAGICPAVLCDGTLGRDT). The residue at position 30 (serine 30) is a Phosphoserine. N-linked (GlcNAc...) asparagine glycosylation is found at asparagine 102, asparagine 182, asparagine 220, and asparagine 267. An RCL region spans residues 365–389 (GTEATAATGVATVIRRQPRTLNFNR).

This sequence belongs to the serpin family. Post-translationally, N-glycosylated. In terms of tissue distribution, liver.

The protein localises to the secreted. The chain is Serine protease inhibitor A3L (Serpina3l) from Rattus norvegicus (Rat).